The following is a 704-amino-acid chain: Elongation factor G (704 aa).

In terms of domain architecture, tr-type G spans 8–291 (VRYRNIGISA…AVVEYLPSPS (284 aa)). GTP contacts are provided by residues 17–24 (AHIDAGKT), 88–92 (DTPGH), and 142–145 (NKMD).

It belongs to the TRAFAC class translation factor GTPase superfamily. Classic translation factor GTPase family. EF-G/EF-2 subfamily.

Its subcellular location is the cytoplasm. Its function is as follows. Catalyzes the GTP-dependent ribosomal translocation step during translation elongation. During this step, the ribosome changes from the pre-translocational (PRE) to the post-translocational (POST) state as the newly formed A-site-bound peptidyl-tRNA and P-site-bound deacylated tRNA move to the P and E sites, respectively. Catalyzes the coordinated movement of the two tRNA molecules, the mRNA and conformational changes in the ribosome. The sequence is that of Elongation factor G from Blochmanniella pennsylvanica (strain BPEN).